A 185-amino-acid chain; its full sequence is Ribosome-recycling factor (185 aa).

Residues A135 to E159 are disordered.

It belongs to the RRF family.

It is found in the cytoplasm. In terms of biological role, responsible for the release of ribosomes from messenger RNA at the termination of protein biosynthesis. May increase the efficiency of translation by recycling ribosomes from one round of translation to another. The polypeptide is Ribosome-recycling factor (Campylobacter curvus (strain 525.92)).